A 437-amino-acid chain; its full sequence is Bifunctional protein GlmU (437 aa).

The pyrophosphorylase stretch occupies residues 1 to 223 (MHNTAVILAA…WDECRGVNSR (223 aa)). Residues 8-11 (LAAG), Lys22, Gln70, 75-76 (GT), 96-98 (YGD), Gly135, Glu149, Asn164, and Asn221 each bind UDP-N-acetyl-alpha-D-glucosamine. Asp98 provides a ligand contact to Mg(2+). Asn221 provides a ligand contact to Mg(2+). Residues 224–244 (AELAAAEAAMQSRLRAAALAA) form a linker region. The tract at residues 245–437 (GVTMTAPETV…AELRMTKGKR (193 aa)) is N-acetyltransferase. UDP-N-acetyl-alpha-D-glucosamine-binding residues include Arg310 and Lys328. The Proton acceptor role is filled by His340. The UDP-N-acetyl-alpha-D-glucosamine site is built by Tyr343 and Asn354. Residues Ala357, 363–364 (NY), Ser382, Ala400, and Arg417 each bind acetyl-CoA.

This sequence in the N-terminal section; belongs to the N-acetylglucosamine-1-phosphate uridyltransferase family. It in the C-terminal section; belongs to the transferase hexapeptide repeat family. As to quaternary structure, homotrimer. Requires Mg(2+) as cofactor.

It is found in the cytoplasm. It catalyses the reaction alpha-D-glucosamine 1-phosphate + acetyl-CoA = N-acetyl-alpha-D-glucosamine 1-phosphate + CoA + H(+). It carries out the reaction N-acetyl-alpha-D-glucosamine 1-phosphate + UTP + H(+) = UDP-N-acetyl-alpha-D-glucosamine + diphosphate. Its pathway is nucleotide-sugar biosynthesis; UDP-N-acetyl-alpha-D-glucosamine biosynthesis; N-acetyl-alpha-D-glucosamine 1-phosphate from alpha-D-glucosamine 6-phosphate (route II): step 2/2. It functions in the pathway nucleotide-sugar biosynthesis; UDP-N-acetyl-alpha-D-glucosamine biosynthesis; UDP-N-acetyl-alpha-D-glucosamine from N-acetyl-alpha-D-glucosamine 1-phosphate: step 1/1. The protein operates within bacterial outer membrane biogenesis; LPS lipid A biosynthesis. Catalyzes the last two sequential reactions in the de novo biosynthetic pathway for UDP-N-acetylglucosamine (UDP-GlcNAc). The C-terminal domain catalyzes the transfer of acetyl group from acetyl coenzyme A to glucosamine-1-phosphate (GlcN-1-P) to produce N-acetylglucosamine-1-phosphate (GlcNAc-1-P), which is converted into UDP-GlcNAc by the transfer of uridine 5-monophosphate (from uridine 5-triphosphate), a reaction catalyzed by the N-terminal domain. The chain is Bifunctional protein GlmU from Acidiphilium cryptum (strain JF-5).